The sequence spans 197 residues: Large ribosomal subunit protein bL25 (197 aa).

The protein belongs to the bacterial ribosomal protein bL25 family. CTC subfamily. In terms of assembly, part of the 50S ribosomal subunit; part of the 5S rRNA/L5/L18/L25 subcomplex. Contacts the 5S rRNA. Binds to the 5S rRNA independently of L5 and L18.

This is one of the proteins that binds to the 5S RNA in the ribosome where it forms part of the central protuberance. The sequence is that of Large ribosomal subunit protein bL25 from Streptomyces avermitilis (strain ATCC 31267 / DSM 46492 / JCM 5070 / NBRC 14893 / NCIMB 12804 / NRRL 8165 / MA-4680).